Reading from the N-terminus, the 657-residue chain is N-acetylgalactosaminyltransferase 7 (657 aa).

The Cytoplasmic segment spans residues 1–6; the sequence is MRLKIG. A helical; Signal-anchor for type II membrane protein transmembrane segment spans residues 7–29; that stretch reads FILRSLLVVGSFLGLVVLWSSLT. At 30 to 657 the chain is on the lumenal side; it reads PRPDDPSPLS…KWEMNNIHSV (628 aa). Positions 31 to 65 are disordered; sequence RPDDPSPLSRMREDRDVNDPMPNRGGNGLAPGEDR. 5 cysteine pairs are disulfide-bonded: Cys197–Cys435, Cys426–Cys507, Cys545–Cys562, Cys585–Cys600, and Cys625–Cys640. Residues 206 to 317 form a catalytic subdomain A region; it reads LLTSSVVIVF…VNWYAPLVAP (112 aa). Asp247 and Arg277 together coordinate substrate. Mn(2+) contacts are provided by Asp301 and His303. Positions 381 to 443 are catalytic subdomain B; it reads PYRSPAMAGG…PCSRVGHIYR (63 aa). Substrate is bound at residue Trp412. His440 provides a ligand contact to Mn(2+). Arg443 serves as a coordination point for substrate. The Ricin B-type lectin domain maps to 532–652; sequence VDWGEIRGFE…SKTTQKWEMN (121 aa).

Belongs to the glycosyltransferase 2 family. GalNAc-T subfamily. The cofactor is Mn(2+). In terms of tissue distribution, widely expressed. Expressed in uterus, retina, kidney, small intestine, omentum, stomach and CNS.

The protein resides in the golgi apparatus membrane. It catalyses the reaction L-seryl-[protein] + UDP-N-acetyl-alpha-D-galactosamine = a 3-O-[N-acetyl-alpha-D-galactosaminyl]-L-seryl-[protein] + UDP + H(+). It carries out the reaction L-threonyl-[protein] + UDP-N-acetyl-alpha-D-galactosamine = a 3-O-[N-acetyl-alpha-D-galactosaminyl]-L-threonyl-[protein] + UDP + H(+). It participates in protein modification; protein glycosylation. Its function is as follows. Glycopeptide transferase involved in O-linked oligosaccharide biosynthesis, which catalyzes the transfer of an N-acetyl-D-galactosamine residue to an already glycosylated peptide. In contrast to other proteins of the family, it does not act as a peptide transferase that transfers GalNAc onto serine or threonine residue on the protein receptor, but instead requires the prior addition of a GalNAc on a peptide before adding additional GalNAc moieties. Some peptide transferase activity is however not excluded, considering that its appropriate peptide substrate may remain unidentified. The sequence is that of N-acetylgalactosaminyltransferase 7 (GALNT7) from Homo sapiens (Human).